Here is a 282-residue protein sequence, read N- to C-terminus: Ubiquinone biosynthesis protein COQ4 homolog, mitochondrial (282 aa).

The N-terminal 30 residues, 1 to 30 (MFVRKSCYSLINATRRCLRYRQLSSTTAGT), are a transit peptide targeting the mitochondrion. His186, Asp187, His190, and Glu202 together coordinate Zn(2+).

It belongs to the COQ4 family. In terms of assembly, component of a multi-subunit COQ enzyme complex. It depends on Zn(2+) as a cofactor.

The protein resides in the mitochondrion inner membrane. The catalysed reaction is a 4-hydroxy-3-methoxy-5-(all-trans-polyprenyl)benzoate + H(+) = a 2-methoxy-6-(all-trans-polyprenyl)phenol + CO2. It participates in cofactor biosynthesis; ubiquinone biosynthesis. Its function is as follows. Lyase that catalyzes the C1-decarboxylation of 4-hydroxy-3-methoxy-5-(all-trans-polyprenyl)benzoic acid into 2-methoxy-6-(all-trans-polyprenyl)phenol during ubiquinone biosynthesis. In Anopheles gambiae (African malaria mosquito), this protein is Ubiquinone biosynthesis protein COQ4 homolog, mitochondrial.